A 293-amino-acid chain; its full sequence is Cyclohexadienyl dehydrogenase (293 aa).

The Prephenate/arogenate dehydrogenase domain occupies 5–293 (KHIAIIGLGL…ALKTDHDIRP (289 aa)). 6-30 (HIAIIGLGLIGSSAARATKAYCPDV) is a binding site for NAD(+).

This sequence belongs to the prephenate/arogenate dehydrogenase family. Homodimer.

It catalyses the reaction L-arogenate + NAD(+) = L-tyrosine + CO2 + NADH. The catalysed reaction is prephenate + NAD(+) = 3-(4-hydroxyphenyl)pyruvate + CO2 + NADH. Its pathway is amino-acid biosynthesis; L-tyrosine biosynthesis; (4-hydroxyphenyl)pyruvate from prephenate (NAD(+) route): step 1/1. It functions in the pathway amino-acid biosynthesis; L-tyrosine biosynthesis; L-tyrosine from L-arogenate (NAD(+) route): step 1/1. Insensitive to feedback inhibition by L-tyrosine. Its function is as follows. Can function as either prephenate dehydrogenase or as arogenate dehydrogenase in the biosynthesis of L-tyrosine. Catalyzes two analogous reactions: converts prephenate to 4-hydroxyphenylpyruvate and transforms L-arogenate to L-tyrosine. Is not able to utilize NADP(+) instead of NAD(+) as cosubstrate. The protein is Cyclohexadienyl dehydrogenase of Zymomonas mobilis subsp. mobilis (strain ATCC 31821 / ZM4 / CP4).